A 556-amino-acid chain; its full sequence is MKTDIEIAQSIELKPIVDVVEKLGISYDDLELYGKYKAKLSFDKIRAVESNPVGKLILVTAINPTPAGEGKSTLTIGLADALNKIGKKTMIAIREPSLGPVMGIKGGAAGGGYAQVLPMEDINLHFTGDMHAITTANNALSALIDNHLHQGNELGIDQRRILWKRVVDLNDRTLRHVTVGLGGPLNGIPREDGFDITVASEIMAILCLATDIEDLKRRLANIVIGYRYDRTPVSVGDLQVEGALALILKDAIKPNLVQTIYGTPAFVHGGPFANIAHGCNSVLATTTALHLADYTVTEAGFGADLGAEKFLDIKTPNLPTSPDAVVIVATLRALKMNGGVAKDALTEENVEAVRAGFANLKRHVENIRKFGIPAVVAINEFVSDTEAEIAALKELCASIDVPVELASVWADGAEGGVALAETVVKTIAENPANYKRLYDNDLSVQEKIEKIVTEIYRGSKVNFEKKAQTQIAQIVQNGWDKLPICMAKTQYSFSDNPNALGAPENFEITIRELVPKLGAGFIVALTGDVMTMPGLPKRPAALNMDVESDGTVLGLF.

Residue 65-72 coordinates ATP; that stretch reads TPAGEGKS.

Belongs to the formate--tetrahydrofolate ligase family.

The enzyme catalyses (6S)-5,6,7,8-tetrahydrofolate + formate + ATP = (6R)-10-formyltetrahydrofolate + ADP + phosphate. It functions in the pathway one-carbon metabolism; tetrahydrofolate interconversion. This Streptococcus pneumoniae serotype 4 (strain ATCC BAA-334 / TIGR4) protein is Formate--tetrahydrofolate ligase.